The following is a 218-amino-acid chain: Small ribosomal subunit protein uS3c (218 aa).

The region spanning 47–118 (VQKNMRTSSG…KLNIAVTRIA (72 aa)) is the KH type-2 domain.

This sequence belongs to the universal ribosomal protein uS3 family. As to quaternary structure, part of the 30S ribosomal subunit.

It localises to the plastid. Its subcellular location is the chloroplast. The chain is Small ribosomal subunit protein uS3c (rps3) from Solanum lycopersicum (Tomato).